We begin with the raw amino-acid sequence, 275 residues long: Undecaprenyl-diphosphatase (275 aa).

A run of 7 helical transmembrane segments spans residues 8 to 28 (WTIV…PIPI), 45 to 65 (ARGL…VLII), 92 to 112 (FMFV…GVLF), 119 to 139 (FIGE…AAAI), 197 to 217 (FSFL…IPNI), 225 to 245 (ELWI…YFAL), and 255 to 275 (GNLK…LIFL).

The protein belongs to the UppP family.

It is found in the cell membrane. The catalysed reaction is di-trans,octa-cis-undecaprenyl diphosphate + H2O = di-trans,octa-cis-undecaprenyl phosphate + phosphate + H(+). In terms of biological role, catalyzes the dephosphorylation of undecaprenyl diphosphate (UPP). Confers resistance to bacitracin. The chain is Undecaprenyl-diphosphatase from Oceanobacillus iheyensis (strain DSM 14371 / CIP 107618 / JCM 11309 / KCTC 3954 / HTE831).